We begin with the raw amino-acid sequence, 201 residues long: FMN reductase (NADH) RutF (201 aa).

A disordered region spans residues 169-201 (APRSGAAPAEPARAARALGARPAEGPALALRSA).

It belongs to the non-flavoprotein flavin reductase family. RutF subfamily.

The catalysed reaction is FMNH2 + NAD(+) = FMN + NADH + 2 H(+). In terms of biological role, catalyzes the reduction of FMN to FMNH2 which is used to reduce pyrimidine by RutA via the Rut pathway. The sequence is that of FMN reductase (NADH) RutF from Methylorubrum extorquens (strain ATCC 14718 / DSM 1338 / JCM 2805 / NCIMB 9133 / AM1) (Methylobacterium extorquens).